The following is a 1002-amino-acid chain: Copper-transporting ATPase HMA5 (1002 aa).

A compositionally biased stretch (low complexity) spans arginine 32 to alanine 48. Residues arginine 32–leucine 63 are disordered. Positions glycine 49–aspartate 60 are enriched in gly residues. 3 HMA domains span residues lysine 75–lysine 141, leucine 153–isoleucine 219, and serine 228–leucine 294. The Cu(+) site is built by cysteine 86, cysteine 89, cysteine 164, and cysteine 167. The next 8 helical transmembrane spans lie at phenylalanine 320–isoleucine 340, methionine 354–glycine 374, methionine 392–leucine 412, phenylalanine 425–leucine 445, valine 585–glycine 605, leucine 624–alanine 644, tyrosine 943–proline 963, and tryptophan 972–leucine 992.

This sequence belongs to the cation transport ATPase (P-type) (TC 3.A.3) family. Type IB subfamily. In terms of tissue distribution, expressed in root pericycle cells, xylem region of diffuse vascular bundles in the first node, and vascular tissues of peduncle, rachis and husk.

The protein localises to the cell membrane. The catalysed reaction is Cu(+)(in) + ATP + H2O = Cu(+)(out) + ADP + phosphate + H(+). In terms of biological role, copper (Cu) transporter that plays an essential role in promoting translocation of Cu from roots to shoots. Involved in loading Cu to the xylem of the roots and other organs, including panicles. This chain is Copper-transporting ATPase HMA5, found in Oryza sativa subsp. japonica (Rice).